Here is a 415-residue protein sequence, read N- to C-terminus: Tyrosine--tRNA ligase (415 aa).

Positions 54 to 63 match the 'HIGH' region motif; sequence PTGSNIHLGH. The 'KMSKS' region motif lies at 248 to 252; the sequence is KMSKT. Residue K251 coordinates ATP. Positions 351 to 415 constitute an S4 RNA-binding domain; it reads AKAFYLMSAV…GKKTFRRLTA (65 aa).

Belongs to the class-I aminoacyl-tRNA synthetase family. TyrS type 2 subfamily. As to quaternary structure, homodimer.

It localises to the cytoplasm. It carries out the reaction tRNA(Tyr) + L-tyrosine + ATP = L-tyrosyl-tRNA(Tyr) + AMP + diphosphate + H(+). Its function is as follows. Catalyzes the attachment of tyrosine to tRNA(Tyr) in a two-step reaction: tyrosine is first activated by ATP to form Tyr-AMP and then transferred to the acceptor end of tRNA(Tyr). The sequence is that of Tyrosine--tRNA ligase from Synechococcus sp. (strain CC9902).